The chain runs to 423 residues: UPF0229 protein PSPPH_0628 (423 aa).

Residues 65–110 are disordered; sequence HHGRGGKQTVVHPGNKEFTTGEHIARPQGGGGGKGPGKAGNSGEGM. Residues 92-107 show a composition bias toward gly residues; the sequence is QGGGGGKGPGKAGNSG.

The protein belongs to the UPF0229 family.

This chain is UPF0229 protein PSPPH_0628, found in Pseudomonas savastanoi pv. phaseolicola (strain 1448A / Race 6) (Pseudomonas syringae pv. phaseolicola (strain 1448A / Race 6)).